A 506-amino-acid polypeptide reads, in one-letter code: Maturase K (506 aa).

It belongs to the intron maturase 2 family. MatK subfamily.

Its subcellular location is the plastid. The protein resides in the chloroplast. In terms of biological role, usually encoded in the trnK tRNA gene intron. Probably assists in splicing its own and other chloroplast group II introns. This chain is Maturase K, found in Rhododendron tomentosum (Marsh Labrador tea).